The chain runs to 222 residues: UPF0758 protein YicR (222 aa).

The MPN domain occupies 100–222 (PLLSPEMTRE…YVSFAERGWI (123 aa)). Residues histidine 171, histidine 173, and aspartate 184 each contribute to the Zn(2+) site. Positions 171 to 184 (HNHPSGCAEPSKAD) match the JAMM motif motif.

It belongs to the UPF0758 family. YicR subfamily.

The protein is UPF0758 protein YicR of Escherichia coli O9:H4 (strain HS).